Here is a 350-residue protein sequence, read N- to C-terminus: uncharacterized protein (350 aa).

The first 27 residues, 1–27 (MKNKKRVLIASSLSCAILLLSAATTQA), serve as a signal peptide directing secretion. Residues 28–71 (NSAHKDSQDQNKKEHVDKSQQKEKRNVTNKDKNSTVPDDIGKNG) are disordered. Over residues 30 to 60 (AHKDSQDQNKKEHVDKSQQKEKRNVTNKDKN) the composition is skewed to basic and acidic residues.

The protein belongs to the aerolysin family.

This is an uncharacterized protein from Staphylococcus aureus (strain MSSA476).